The sequence spans 438 residues: V-type ATP synthase beta chain (438 aa).

It belongs to the ATPase alpha/beta chains family.

Produces ATP from ADP in the presence of a proton gradient across the membrane. The V-type beta chain is a regulatory subunit. The chain is V-type ATP synthase beta chain (atpB) from Chlamydia pneumoniae (Chlamydophila pneumoniae).